We begin with the raw amino-acid sequence, 256 residues long: UPF0246 protein SPO0106 (256 aa).

It belongs to the UPF0246 family.

The sequence is that of UPF0246 protein SPO0106 from Ruegeria pomeroyi (strain ATCC 700808 / DSM 15171 / DSS-3) (Silicibacter pomeroyi).